The primary structure comprises 342 residues: Holliday junction branch migration complex subunit RuvB (342 aa).

A disordered region spans residues 1-22 (MTLKPVREVSPGSQEGEERLEQ). Residues 1–185 (MTLKPVREVS…FPIQERLGYY (185 aa)) are large ATPase domain (RuvB-L). Residues Leu24, Arg25, Gly66, Lys69, Thr70, Ser71, 132–134 (EDY), Arg175, Tyr185, and Arg222 contribute to the ATP site. Thr70 is a Mg(2+) binding site. Residues 186-256 (EPTELREIAV…IVETTLERLE (71 aa)) are small ATPAse domain (RuvB-S). Positions 259 to 342 (GRGLDAMDRR…RPQGKQGSLI (84 aa)) are head domain (RuvB-H). The DNA site is built by Arg295, Arg314, and Arg319.

The protein belongs to the RuvB family. Homohexamer. Forms an RuvA(8)-RuvB(12)-Holliday junction (HJ) complex. HJ DNA is sandwiched between 2 RuvA tetramers; dsDNA enters through RuvA and exits via RuvB. An RuvB hexamer assembles on each DNA strand where it exits the tetramer. Each RuvB hexamer is contacted by two RuvA subunits (via domain III) on 2 adjacent RuvB subunits; this complex drives branch migration. In the full resolvosome a probable DNA-RuvA(4)-RuvB(12)-RuvC(2) complex forms which resolves the HJ.

The protein localises to the cytoplasm. It catalyses the reaction ATP + H2O = ADP + phosphate + H(+). In terms of biological role, the RuvA-RuvB-RuvC complex processes Holliday junction (HJ) DNA during genetic recombination and DNA repair, while the RuvA-RuvB complex plays an important role in the rescue of blocked DNA replication forks via replication fork reversal (RFR). RuvA specifically binds to HJ cruciform DNA, conferring on it an open structure. The RuvB hexamer acts as an ATP-dependent pump, pulling dsDNA into and through the RuvAB complex. RuvB forms 2 homohexamers on either side of HJ DNA bound by 1 or 2 RuvA tetramers; 4 subunits per hexamer contact DNA at a time. Coordinated motions by a converter formed by DNA-disengaged RuvB subunits stimulates ATP hydrolysis and nucleotide exchange. Immobilization of the converter enables RuvB to convert the ATP-contained energy into a lever motion, pulling 2 nucleotides of DNA out of the RuvA tetramer per ATP hydrolyzed, thus driving DNA branch migration. The RuvB motors rotate together with the DNA substrate, which together with the progressing nucleotide cycle form the mechanistic basis for DNA recombination by continuous HJ branch migration. Branch migration allows RuvC to scan DNA until it finds its consensus sequence, where it cleaves and resolves cruciform DNA. The sequence is that of Holliday junction branch migration complex subunit RuvB from Anaeromyxobacter sp. (strain Fw109-5).